The chain runs to 497 residues: Putative aldehyde dehydrogenase AldA (497 aa).

213–219 contacts NAD(+); sequence GKGSESG. Active-site residues include E257 and C291.

It belongs to the aldehyde dehydrogenase family.

The catalysed reaction is an aldehyde + NAD(+) + H2O = a carboxylate + NADH + 2 H(+). The polypeptide is Putative aldehyde dehydrogenase AldA (aldA) (Staphylococcus haemolyticus (strain JCSC1435)).